Reading from the N-terminus, the 273-residue chain is 2,3,4,5-tetrahydropyridine-2,6-dicarboxylate N-succinyltransferase (273 aa).

Substrate-binding residues include arginine 104 and aspartate 141.

It belongs to the transferase hexapeptide repeat family. In terms of assembly, homotrimer.

Its subcellular location is the cytoplasm. The enzyme catalyses (S)-2,3,4,5-tetrahydrodipicolinate + succinyl-CoA + H2O = (S)-2-succinylamino-6-oxoheptanedioate + CoA. It functions in the pathway amino-acid biosynthesis; L-lysine biosynthesis via DAP pathway; LL-2,6-diaminopimelate from (S)-tetrahydrodipicolinate (succinylase route): step 1/3. The chain is 2,3,4,5-tetrahydropyridine-2,6-dicarboxylate N-succinyltransferase from Acinetobacter baylyi (strain ATCC 33305 / BD413 / ADP1).